The following is a 125-amino-acid chain: Small ribosomal subunit protein eS8 (125 aa).

Belongs to the eukaryotic ribosomal protein eS8 family. In terms of assembly, part of the 30S ribosomal subunit.

The chain is Small ribosomal subunit protein eS8 from Methanosphaerula palustris (strain ATCC BAA-1556 / DSM 19958 / E1-9c).